A 305-amino-acid polypeptide reads, in one-letter code: uncharacterized protein (305 aa).

The helical transmembrane segment at 8–28 threads the bilayer; that stretch reads IGALVTAVIAIGIVFSHMILF.

The protein localises to the membrane. This is an uncharacterized protein from Bacillus subtilis (strain 168).